Here is a 268-residue protein sequence, read N- to C-terminus: Tetraspanin-5 (268 aa).

The Cytoplasmic portion of the chain corresponds to 1-17 (MSGKHYKGPEVSCCIKY). A helical membrane pass occupies residues 18–38 (FIFGFNVIFWFLGITFLGIGL). Residues 39–61 (WAWNEKGVLSNISSITDLGGFDP) lie on the Extracellular side of the membrane. N-linked (GlcNAc...) asparagine glycosylation occurs at Asn49. The chain crosses the membrane as a helical span at residues 62–82 (VWLFLVVGGVMFILGFAGCIG). Residues 83–92 (ALRENTFLLK) lie on the Cytoplasmic side of the membrane. The helical transmembrane segment at 93-113 (FFSVFLGIIFFLELTAGVLAF) threads the bilayer. Over 114-232 (VFKDWIKDQL…PQFEKWLQDN (119 aa)) the chain is Extracellular. Disulfide bonds link Cys153/Cys221, Cys154/Cys186, Cys170/Cys180, and Cys187/Cys200. Residues Asn169 and Asn174 are each glycosylated (N-linked (GlcNAc...) asparagine). Asn232 is a glycosylation site (N-linked (GlcNAc...) asparagine). A helical membrane pass occupies residues 233–253 (LTIVAGIFIGIALLQIFGICL). The Cytoplasmic portion of the chain corresponds to 254–268 (AQNLVSDIEAVRASW).

It belongs to the tetraspanin (TM4SF) family. Interacts with ADAM10; the interaction influences ADAM10 substrate specificity, endocytosis and turnover. Post-translationally, palmitoylated.

The protein localises to the cell membrane. In terms of biological role, part of TspanC8 subgroup, composed of 6 members that interact with the transmembrane metalloprotease ADAM10. This interaction is required for ADAM10 exit from the endoplasmic reticulum and for enzymatic maturation and trafficking to the cell surface as well as substrate specificity. Different TspanC8/ADAM10 complexes have distinct substrates. Promotes ADAM10-mediated cleavage of CD44. Seems to regulate VE-cadherin expression in endothelial cells probably through interaction with ADAM10, promoting leukocyte transmigration. In Homo sapiens (Human), this protein is Tetraspanin-5.